Here is a 247-residue protein sequence, read N- to C-terminus: Granzyme B(G,H) (247 aa).

A signal peptide spans 1 to 18 (MKILLLLLTLSLASRTKA). The propeptide at 19–20 (GE) is activation peptide. A Peptidase S1 domain is found at 21–245 (IIGGHEVKPH…FLSWIKKTMK (225 aa)). Residues C49 and C65 are joined by a disulfide bond. H64 functions as the Charge relay system in the catalytic mechanism. N71 carries N-linked (GlcNAc...) asparagine glycosylation. The Charge relay system role is filled by D108. 2 disulfides stabilise this stretch: C142/C209 and C173/C188. A glycan (N-linked (GlcNAc...) asparagine) is linked at N182. S203 (charge relay system) is an active-site residue.

The protein belongs to the peptidase S1 family. Granzyme subfamily.

It is found in the secreted. The protein resides in the cytolytic granule. The enzyme catalyses Preferential cleavage: -Asp-|-Xaa- &gt;&gt; -Asn-|-Xaa- &gt; -Met-|-Xaa-, -Ser-|-Xaa-.. With respect to regulation, inactivated by the serine protease inhibitor diisopropylfluorophosphate. Its function is as follows. Abundant protease in the cytosolic granules of cytotoxic T-cells and NK-cells which activates caspase-independent pyroptosis when delivered into the target cell through the immunological synapse. It cleaves after Asp. Once delivered into the target cell, acts by catalyzing cleavage of gasdermin-E (GSDME), releasing the pore-forming moiety of GSDME, thereby triggering pyroptosis and target cell death. Seems to be linked to an activation cascade of caspases (aspartate-specific cysteine proteases) responsible for apoptosis execution. Cleaves caspase-3 and -9 (CASP3 and CASP9, respectively) to give rise to active enzymes mediating apoptosis. Cleaves and activates CASP7 in response to bacterial infection, promoting plasma membrane repair. This chain is Granzyme B(G,H) (Gzmb), found in Mus musculus (Mouse).